We begin with the raw amino-acid sequence, 218 residues long: MFEYLIKFSPKILFIVEGTLITLKYSVIAVIFGLVIGVLLALCKVNKNRALRLFADFYTSIFRGTPLLIQLSIIYFASPYLIGIKFTVFMAGAISFSLNSGAYVSEVIRAGINAVDKGQFEAAEALAIPKFLIMKDIILPQAIKNIFPSLTNELINLIKESAIISMFGEMDLMKRAQIVSLETYNYFFPMIVAACCYYILVMLISFIARIIEKKLIVS.

Positions 19 to 208 (TLITLKYSVI…ILVMLISFIA (190 aa)) constitute an ABC transmembrane type-1 domain. 4 helical membrane-spanning segments follow: residues 25–45 (YSVIAVIFGLVIGVLLALCKV), 57–79 (FYTSIFRGTPLLIQLSIIYFASP), 86–108 (FTVFMAGAISFSLNSGAYVSEVI), and 187–207 (FFPMIVAACCYYILVMLISFI).

This sequence belongs to the binding-protein-dependent transport system permease family. HisMQ subfamily.

The protein resides in the cell inner membrane. In terms of biological role, part of the binding-protein-dependent transport system for glutamine; probably responsible for the translocation of the substrate across the membrane. The polypeptide is Putative glutamine transport system permease protein GlnP (glnP) (Rickettsia bellii (strain RML369-C)).